Here is an 890-residue protein sequence, read N- to C-terminus: Translation initiation factor IF-2 (890 aa).

The disordered stretch occupies residues 45-302; it reads LIDHLNQKNS…SSLQQGFQKP (258 aa). A compositionally biased stretch (polar residues) spans 67-81; it reads STLNIPSTGGKSKSV. A compositionally biased stretch (basic and acidic residues) spans 92–217; that stretch reads VKRDPQEAER…RMAEENKWTD (126 aa). Positions 252-266 are enriched in basic residues; it reads GRGRNAKAARPKKGN. Basic and acidic residues predominate over residues 267–280; sequence KHAESKADREEARA. A tr-type G domain is found at 389 to 558; the sequence is PRAPVVTIMG…LLQAEVLELK (170 aa). Residues 398-405 are G1; the sequence is GHVDHGKT. 398–405 contacts GTP; that stretch reads GHVDHGKT. Residues 423 to 427 are G2; that stretch reads GITQH. A G3 region spans residues 444–447; that stretch reads DTPG. Residues 444–448 and 498–501 contribute to the GTP site; these read DTPGH and NKID. The segment at 498–501 is G4; it reads NKID. Positions 534–536 are G5; the sequence is SAK. Position 808 is an N6-acetyllysine (Lys808).

This sequence belongs to the TRAFAC class translation factor GTPase superfamily. Classic translation factor GTPase family. IF-2 subfamily.

It is found in the cytoplasm. Its function is as follows. One of the essential components for the initiation of protein synthesis. Protects formylmethionyl-tRNA from spontaneous hydrolysis and promotes its binding to the 30S ribosomal subunits. Also involved in the hydrolysis of GTP during the formation of the 70S ribosomal complex. The sequence is that of Translation initiation factor IF-2 from Shigella dysenteriae serotype 1 (strain Sd197).